The following is a 647-amino-acid chain: Sialidase (647 aa).

A signal peptide spans 1-37 (MTANPYLRRLPRRRAVSFLLAPALAAATVAGASPAQA). Arginine 68 contacts substrate. Aspartate 92 (proton acceptor) is an active-site residue. BNR repeat units follow at residues 102–113 (RRSTDGGRTWGE), 175–186 (ATSTDGGLTWSH), and 239–250 (VYSDDHGRTWRA). Catalysis depends on glutamate 260, which acts as the Nucleophile. A substrate-binding site is contributed by arginine 276. 2 BNR repeats span residues 287 to 298 (AVSTDGGHSYGP) and 348 to 359 (RMSCDDGQTWPV). Tyrosine 370 functions as the Nucleophile in the catalytic mechanism. Residues 496–646 (TFTVTVGLLD…AVAELEVEGQ (151 aa)) enclose the F5/8 type C domain.

This sequence belongs to the glycosyl hydrolase 33 family.

The protein localises to the secreted. It catalyses the reaction Hydrolysis of alpha-(2-&gt;3)-, alpha-(2-&gt;6)-, alpha-(2-&gt;8)- glycosidic linkages of terminal sialic acid residues in oligosaccharides, glycoproteins, glycolipids, colominic acid and synthetic substrates.. Its function is as follows. To release sialic acids for use as carbon and energy sources for this non-pathogenic bacterium while in pathogenic microorganisms, sialidases have been suggested to be pathogenic factors. The protein is Sialidase (nedA) of Micromonospora viridifaciens.